The chain runs to 358 residues: D-alanine--D-alanine ligase (358 aa).

The ATP-grasp domain occupies 136–341 (KYILQAAGVP…YGDLIEELIQ (206 aa)). ATP is bound at residue 169–224 (EGSLLYPMFVKPANMGSSVGISKAENREELQNALALAYQYDSRAIVEQGIEAREIE). 3 residues coordinate Mg(2+): Asp-295, Glu-308, and Asn-310.

This sequence belongs to the D-alanine--D-alanine ligase family. It depends on Mg(2+) as a cofactor. Requires Mn(2+) as cofactor.

Its subcellular location is the cytoplasm. It carries out the reaction 2 D-alanine + ATP = D-alanyl-D-alanine + ADP + phosphate + H(+). It functions in the pathway cell wall biogenesis; peptidoglycan biosynthesis. Functionally, cell wall formation. This chain is D-alanine--D-alanine ligase, found in Enterococcus hirae (strain ATCC 9790 / DSM 20160 / JCM 8729 / LMG 6399 / NBRC 3181 / NCIMB 6459 / NCDO 1258 / NCTC 12367 / WDCM 00089 / R).